Here is a 429-residue protein sequence, read N- to C-terminus: Acetylornithine aminotransferase (429 aa).

Pyridoxal 5'-phosphate-binding positions include 126 to 127 and Phe-160; that span reads GA. Position 163 (Arg-163) interacts with N(2)-acetyl-L-ornithine. Pyridoxal 5'-phosphate is bound at residue 251-254; sequence DEVQ. Lys-280 carries the post-translational modification N6-(pyridoxal phosphate)lysine. Residue Ser-307 coordinates N(2)-acetyl-L-ornithine. Pyridoxal 5'-phosphate is bound at residue Thr-308.

This sequence belongs to the class-III pyridoxal-phosphate-dependent aminotransferase family. ArgD subfamily. In terms of assembly, homodimer. The cofactor is pyridoxal 5'-phosphate.

The protein resides in the cytoplasm. It carries out the reaction N(2)-acetyl-L-ornithine + 2-oxoglutarate = N-acetyl-L-glutamate 5-semialdehyde + L-glutamate. It participates in amino-acid biosynthesis; L-arginine biosynthesis; N(2)-acetyl-L-ornithine from L-glutamate: step 4/4. Its activity is regulated as follows. N-acetylornithine aminotransferase activity is stimulated by the addition of Mg(2+), Ca(2+) or Mn(2+), and inhibited by the addition of Zn(2+), Cu(2+), Co(2+) or Ni(2+). Functionally, catalyzes the reversible conversion of N-acetylornithine to N-acetylglutamate-5-semialdehyde. In vitro, also shows very low ornithine aminotransferase (OAT) and gamma-aminobutyrate aminotransferase (GABA-AT) activity, catalyzing the conversion of ornithine (Orn) to glutamate-5-semialdehyde and of gamma-aminobutyric acid (GABA) to succinate semialdehyde. It has been shown to function as a GABA-AT and contributes to closing the tricarboxylic acid cycle of Synechocystis sp. PCC6803 via the GABA shunt. However, the catalytic efficiency toward N-acetylornithine is 2500-fold and 10700-fold higher than that toward ornithine and gamma-aminobutyrate, respectively, indicating that the protein mainly functions as an N-acetylornithine aminotransferase. In Synechocystis sp. (strain ATCC 27184 / PCC 6803 / Kazusa), this protein is Acetylornithine aminotransferase.